Reading from the N-terminus, the 382-residue chain is D-galactonate dehydratase (382 aa).

Asp-183 contacts Mg(2+). Catalysis depends on His-185, which acts as the Proton donor. Residues Glu-209 and Glu-235 each coordinate Mg(2+). His-285 (proton acceptor) is an active-site residue.

Belongs to the mandelate racemase/muconate lactonizing enzyme family. GalD subfamily. The cofactor is Mg(2+).

The catalysed reaction is D-galactonate = 2-dehydro-3-deoxy-D-galactonate + H2O. Its pathway is carbohydrate acid metabolism; D-galactonate degradation; D-glyceraldehyde 3-phosphate and pyruvate from D-galactonate: step 1/3. In terms of biological role, catalyzes the dehydration of D-galactonate to 2-keto-3-deoxy-D-galactonate. The protein is D-galactonate dehydratase of Ralstonia pickettii (strain 12J).